A 100-amino-acid chain; its full sequence is Large ribosomal subunit protein uL23 (100 aa).

This sequence belongs to the universal ribosomal protein uL23 family. In terms of assembly, part of the 50S ribosomal subunit. Contacts protein L29, and trigger factor when it is bound to the ribosome.

One of the early assembly proteins it binds 23S rRNA. One of the proteins that surrounds the polypeptide exit tunnel on the outside of the ribosome. Forms the main docking site for trigger factor binding to the ribosome. This chain is Large ribosomal subunit protein uL23, found in Corynebacterium aurimucosum (strain ATCC 700975 / DSM 44827 / CIP 107346 / CN-1) (Corynebacterium nigricans).